A 299-amino-acid polypeptide reads, in one-letter code: MLNDYLQWEKFILRGVEFPTRYRVDGDEVEITPSSRLYVSGMGGSGVVGDLIRDFSIVWNWDVEVTVVKDYFLRARDGLLIAVSYSGNTVETLYSVEYAKKRRIPTVAITTGGKLAQMGVPTIIIPKASAPRAALPQMLTAALHVVRKVYGIPIEIPEALEPPNDPLIHKLMEDFQKRPTIVAPETMRGVAYRVKNEFNENAKIEPSVEILPEAHHNWIEGSERPIVALTSPHIPREHQERVKATLEILGGTLYVVEMSTRGVLTFLREVGVASIKLAESRGVNPLATPRIEALKRRLQ.

Positions 27 to 177 (DEVEITPSSR…IHKLMEDFQK (151 aa)) constitute an SIS domain. D-fructose 6-phosphate-binding residues include Gly44, Ser45, Ser84, Ser86, Thr89, and Arg132. Glu200 functions as the Proton acceptor in the catalytic mechanism. The D-fructose 6-phosphate site is built by His216 and Lys295. The active-site Proton donor is His216. Lys295 functions as the Proton acceptor in the catalytic mechanism.

This sequence belongs to the PGI/PMI family. As to quaternary structure, homodimer.

It carries out the reaction alpha-D-glucose 6-phosphate = beta-D-fructose 6-phosphate. It catalyses the reaction D-mannose 6-phosphate = D-fructose 6-phosphate. With respect to regulation, presence or absence of metal ions or EDTA does not significantly affect the phosphoglucose isomerase activity. Dual specificity isomerase that catalyzes the isomerization of both glucose-6-phosphate and mannose-6-phosphate to fructose-6-phosphate with nearly similar catalytic efficiency. Also catalyzes the epimerization of mannose 6-phosphate to glucose 6-phosphate but the rate of epimerization reaction is 20-fold lower than that of isomerization reaction. In Pyrobaculum calidifontis (strain DSM 21063 / JCM 11548 / VA1), this protein is Bifunctional phosphoglucose/phosphomannose isomerase.